Here is an 89-residue protein sequence, read N- to C-terminus: Small ribosomal subunit protein bS20 (89 aa).

Residues 1-28 form a disordered region; the sequence is MTLANIKSAKKRAIQSEKRRQHNASQRS.

The protein belongs to the bacterial ribosomal protein bS20 family.

Functionally, binds directly to 16S ribosomal RNA. The sequence is that of Small ribosomal subunit protein bS20 from Pasteurella multocida (strain Pm70).